The chain runs to 326 residues: Ribosomal large subunit pseudouridine synthase D (326 aa).

Asp144 is an active-site residue.

The protein belongs to the pseudouridine synthase RluA family.

It localises to the cytoplasm. The enzyme catalyses uridine(1911/1915/1917) in 23S rRNA = pseudouridine(1911/1915/1917) in 23S rRNA. Its function is as follows. Responsible for synthesis of pseudouridine from uracil at positions 1911, 1915 and 1917 in 23S ribosomal RNA. This is Ribosomal large subunit pseudouridine synthase D from Borreliella burgdorferi (strain ATCC 35210 / DSM 4680 / CIP 102532 / B31) (Borrelia burgdorferi).